Here is a 234-residue protein sequence, read N- to C-terminus: Small ribosomal subunit protein eS4 (234 aa).

The S4 RNA-binding domain maps to 43–106 (MPIAVWLRDY…NEYYRVLLDE (64 aa)).

It belongs to the eukaryotic ribosomal protein eS4 family.

In Nanoarchaeum equitans (strain Kin4-M), this protein is Small ribosomal subunit protein eS4.